Here is a 318-residue protein sequence, read N- to C-terminus: Pantothenate kinase (318 aa).

Residue 96–103 (GSVAVGKS) participates in ATP binding.

The protein belongs to the prokaryotic pantothenate kinase family.

It is found in the cytoplasm. The enzyme catalyses (R)-pantothenate + ATP = (R)-4'-phosphopantothenate + ADP + H(+). The protein operates within cofactor biosynthesis; coenzyme A biosynthesis; CoA from (R)-pantothenate: step 1/5. The sequence is that of Pantothenate kinase from Rhodopseudomonas palustris (strain HaA2).